We begin with the raw amino-acid sequence, 223 residues long: Ribose-5-phosphate isomerase A (223 aa).

Substrate is bound by residues 32–35 (TGST), 85–88 (DGAD), and 98–101 (KGGG). The active-site Proton acceptor is glutamate 107. Lysine 125 serves as a coordination point for substrate.

It belongs to the ribose 5-phosphate isomerase family. As to quaternary structure, homodimer.

The catalysed reaction is aldehydo-D-ribose 5-phosphate = D-ribulose 5-phosphate. The protein operates within carbohydrate degradation; pentose phosphate pathway; D-ribose 5-phosphate from D-ribulose 5-phosphate (non-oxidative stage): step 1/1. Catalyzes the reversible conversion of ribose-5-phosphate to ribulose 5-phosphate. This chain is Ribose-5-phosphate isomerase A, found in Pseudomonas paraeruginosa (strain DSM 24068 / PA7) (Pseudomonas aeruginosa (strain PA7)).